Reading from the N-terminus, the 104-residue chain is MTKSELIARLSERLAERNSQLVYKDAELAVKTILDAMANNLAQGSRIEIRGFGSFDLNYRPPRVGRNPKSGASVSVPEKYVPHFKAGKELRERVDLSLLEQTQA.

This sequence belongs to the bacterial histone-like protein family. Heterodimer of an alpha and a beta chain.

In terms of biological role, this protein is one of the two subunits of integration host factor, a specific DNA-binding protein that functions in genetic recombination as well as in transcriptional and translational control. In Chromobacterium violaceum (strain ATCC 12472 / DSM 30191 / JCM 1249 / CCUG 213 / NBRC 12614 / NCIMB 9131 / NCTC 9757 / MK), this protein is Integration host factor subunit beta.